Reading from the N-terminus, the 61-residue chain is Large ribosomal subunit protein eL37 (61 aa).

Zn(2+) contacts are provided by cysteine 19, cysteine 22, cysteine 34, and cysteine 37. The C4-type zinc finger occupies 19-37; sequence CRRCGRNAYNVSKHYCAAC.

This sequence belongs to the eukaryotic ribosomal protein eL37 family. It depends on Zn(2+) as a cofactor.

In terms of biological role, binds to the 23S rRNA. In Saccharolobus islandicus (strain L.S.2.15 / Lassen #1) (Sulfolobus islandicus), this protein is Large ribosomal subunit protein eL37.